The following is a 335-amino-acid chain: tRNA N6-adenosine threonylcarbamoyltransferase (335 aa).

Residues His-111 and His-115 each contribute to the Fe cation site. Substrate is bound by residues 133–137, Asp-166, Gly-179, and Asn-276; that span reads LISGG. Asp-301 contacts Fe cation.

Belongs to the KAE1 / TsaD family. Fe(2+) is required as a cofactor.

The protein localises to the cytoplasm. It carries out the reaction L-threonylcarbamoyladenylate + adenosine(37) in tRNA = N(6)-L-threonylcarbamoyladenosine(37) in tRNA + AMP + H(+). Functionally, required for the formation of a threonylcarbamoyl group on adenosine at position 37 (t(6)A37) in tRNAs that read codons beginning with adenine. Is involved in the transfer of the threonylcarbamoyl moiety of threonylcarbamoyl-AMP (TC-AMP) to the N6 group of A37, together with TsaE and TsaB. TsaD likely plays a direct catalytic role in this reaction. The sequence is that of tRNA N6-adenosine threonylcarbamoyltransferase from Wolbachia pipientis wMel.